The chain runs to 65 residues: RLCLSDYSIFSETIEICPEGHNYCFKKFPKGITRLPWVIRGCAATCPKPEAQVYVDCCARDKCNR.

4 cysteine pairs are disulfide-bonded: cysteine 3–cysteine 24, cysteine 17–cysteine 42, cysteine 46–cysteine 57, and cysteine 58–cysteine 63.

As to expression, expressed by the venom gland.

Its subcellular location is the secreted. In terms of biological role, has anticoagulant activity, since it is able to inhibit the activation of coagulation factor X (F10) by coagulation factor VIIa (F7) (IC(50)=123.8 nM). Also shows weak irreversible neurotoxicity. The protein is Ringhalexin of Hemachatus haemachatus (Rinkhals).